The primary structure comprises 474 residues: Ribulose bisphosphate carboxylase large chain (474 aa).

At Lys13 the chain carries N6,N6,N6-trimethyllysine. Positions 122 and 172 each coordinate substrate. The Proton acceptor role is filled by Lys174. A substrate-binding site is contributed by Lys176. Mg(2+) contacts are provided by Lys200, Asp202, and Glu203. Lys200 carries the post-translational modification N6-carboxylysine. His293 serves as the catalytic Proton acceptor. Substrate is bound by residues Arg294, His326, and Ser378.

Belongs to the RuBisCO large chain family. Type I subfamily. As to quaternary structure, heterohexadecamer of 8 large chains and 8 small chains; disulfide-linked. The disulfide link is formed within the large subunit homodimers. Mg(2+) is required as a cofactor. In terms of processing, the disulfide bond which can form in the large chain dimeric partners within the hexadecamer appears to be associated with oxidative stress and protein turnover.

It localises to the plastid. It is found in the chloroplast. The enzyme catalyses 2 (2R)-3-phosphoglycerate + 2 H(+) = D-ribulose 1,5-bisphosphate + CO2 + H2O. It carries out the reaction D-ribulose 1,5-bisphosphate + O2 = 2-phosphoglycolate + (2R)-3-phosphoglycerate + 2 H(+). Its function is as follows. RuBisCO catalyzes two reactions: the carboxylation of D-ribulose 1,5-bisphosphate, the primary event in carbon dioxide fixation, as well as the oxidative fragmentation of the pentose substrate in the photorespiration process. Both reactions occur simultaneously and in competition at the same active site. The polypeptide is Ribulose bisphosphate carboxylase large chain (Dendrophthora clavata (Columbian mistletoe)).